A 264-amino-acid polypeptide reads, in one-letter code: Ribosomal RNA small subunit methyltransferase A (264 aa).

6 residues coordinate S-adenosyl-L-methionine: asparagine 12, leucine 14, glycine 40, glutamate 61, aspartate 86, and asparagine 105.

It belongs to the class I-like SAM-binding methyltransferase superfamily. rRNA adenine N(6)-methyltransferase family. RsmA subfamily.

Its subcellular location is the cytoplasm. It carries out the reaction adenosine(1518)/adenosine(1519) in 16S rRNA + 4 S-adenosyl-L-methionine = N(6)-dimethyladenosine(1518)/N(6)-dimethyladenosine(1519) in 16S rRNA + 4 S-adenosyl-L-homocysteine + 4 H(+). Its function is as follows. Specifically dimethylates two adjacent adenosines (A1518 and A1519) in the loop of a conserved hairpin near the 3'-end of 16S rRNA in the 30S particle. May play a critical role in biogenesis of 30S subunits. This Fusobacterium nucleatum subsp. nucleatum (strain ATCC 25586 / DSM 15643 / BCRC 10681 / CIP 101130 / JCM 8532 / KCTC 2640 / LMG 13131 / VPI 4355) protein is Ribosomal RNA small subunit methyltransferase A.